We begin with the raw amino-acid sequence, 153 residues long: METNNNLSTQLFKCYFCDILKLKMHKMSCIHLLYLVLCFLTLTHSAAAGPETLCGAELVDTLQFVCGDRGFYFSKPTGYGSNNRRSHHRGIVDECCFQSCDFRRLEMYCAPAKQAKSARSVRTQRHTDMPKAQKEVHPKNTSRGNTGSRGFRM.

Intrachain disulfides connect cysteine 29–cysteine 38, cysteine 54–cysteine 96, cysteine 66–cysteine 109, and cysteine 100–cysteine 109. Residues 49-77 (GPETLCGAELVDTLQFVCGDRGFYFSKPT) form a b region. The c stretch occupies residues 78-89 (GYGSNNRRSHHR). The segment at 90 to 110 (GIVDECCFQSCDFRRLEMYCA) is a. Residues 111 to 118 (PAKQAKSA) are d. Residues 119 to 153 (RSVRTQRHTDMPKAQKEVHPKNTSRGNTGSRGFRM) constitute a propeptide, e peptide. Residues 119–153 (RSVRTQRHTDMPKAQKEVHPKNTSRGNTGSRGFRM) are disordered. Basic and acidic residues predominate over residues 125-138 (RHTDMPKAQKEVHP). Positions 139-153 (KNTSRGNTGSRGFRM) are enriched in polar residues.

The protein belongs to the insulin family. In terms of tissue distribution, expressed in adult liver, lung, heart, kidney and peritoneal fat.

The protein localises to the secreted. Functionally, the insulin-like growth factors, isolated from plasma, are structurally and functionally related to insulin but have a much higher growth-promoting activity. Promotes head development by inhibiting Wnt signaling during embryogenesis. Acts as a ligand for IGF1R. Binds to the alpha subunit of IGF1R, leading to the activation of the intrinsic tyrosine kinase activity which autophosphorylates tyrosine residues in the beta subunit thus initiatiating a cascade of down-stream signaling events leading to activation of the PI3K-AKT/PKB and the Ras-MAPK pathways. Binds to integrins. Its binding to integrins and subsequent ternary complex formation with integrins and IGFR1 are essential for IGF1 signaling. The sequence is that of Insulin-like growth factor 1.S from Xenopus laevis (African clawed frog).